The primary structure comprises 502 residues: ATP synthase subunit alpha, chloroplastic (502 aa).

Residue 170-177 participates in ATP binding; that stretch reads GDRQTGKT.

This sequence belongs to the ATPase alpha/beta chains family. F-type ATPases have 2 components, CF(1) - the catalytic core - and CF(0) - the membrane proton channel. CF(1) has five subunits: alpha(3), beta(3), gamma(1), delta(1), epsilon(1). CF(0) has four main subunits: a, b, b' and c.

It is found in the plastid. The protein resides in the chloroplast thylakoid membrane. The enzyme catalyses ATP + H2O + 4 H(+)(in) = ADP + phosphate + 5 H(+)(out). In terms of biological role, produces ATP from ADP in the presence of a proton gradient across the membrane. The alpha chain is a regulatory subunit. This Tupiella akineta (Green alga) protein is ATP synthase subunit alpha, chloroplastic.